A 1480-amino-acid chain; its full sequence is Cystic fibrosis transmembrane conductance regulator (1480 aa).

Residues 1–77 lie on the Cytoplasmic side of the membrane; the sequence is MQRSPLEKAS…KLINALRRCF (77 aa). A helical transmembrane segment spans residues 78 to 98; it reads FWRFMFYGIFLYLGEVTKAVQ. In terms of domain architecture, ABC transmembrane type-1 1 spans 81-365; sequence FMFYGIFLYL…WAVQTWYDSL (285 aa). At 99-122 the chain is on the extracellular side; sequence PLLLGRIIASYDPDNKEERSIAIY. A helical transmembrane segment spans residues 123 to 146; the sequence is LGIGLCLLFIVRTLLLHPAIFGLH. Topologically, residues 147–195 are cytoplasmic; the sequence is HIGMQMRIAMFSLIYKKTLKLSSRVLDKISIGQLVSLLSNNLNKFDEGL. Residues 196 to 216 traverse the membrane as a helical segment; sequence ALAHFVWIAPLQVALLMGLIW. At 217–222 the chain is on the extracellular side; the sequence is ELLQAS. A helical transmembrane segment spans residues 223 to 243; the sequence is AFCGLGFLIVLALFQAGLGRM. At 244 to 298 the chain is on the cytoplasmic side; sequence MMKYRDQRAGKINERLVITSEMIENIQSVKAYCWEEAMEKMIENLRQTELKLTRK. The chain crosses the membrane as a helical span at residues 299–319; the sequence is AAYVRYFNSSAFFFSGFFVVF. The Extracellular segment spans residues 320 to 339; sequence LSVLPYALIKGIVLRKIFTT. The chain crosses the membrane as a helical span at residues 340–358; the sequence is ISFCIVLRMAVTRQFPWAV. Topologically, residues 359-858 are cytoplasmic; that stretch reads QTWYDSLGAI…YLRYITVHKS (500 aa). ATP contacts are provided by residues tryptophan 401, serine 434, 458–465, and glutamine 493; that span reads GSTGAGKT. The ABC transporter 1 domain occupies 423–646; sequence NGDDSLFFSN…RPDFSSKLMG (224 aa). A lipid anchor (S-palmitoyl cysteine) is attached at cysteine 524. Residues serine 549 and serine 660 each carry the phosphoserine modification. The tract at residues 654-831 is disordered R region; it reads SAERRNSILT…EEINEEDLKE (178 aa). Phosphoserine; by PKA is present on serine 670. Lysine 688 is covalently cross-linked (Glycyl lysine isopeptide (Lys-Gly) (interchain with G-Cter in ubiquitin)). Phosphoserine is present on residues serine 700 and serine 712. Threonine 717 is subject to Phosphothreonine. 6 positions are modified to phosphoserine: serine 737, serine 753, serine 768, serine 790, serine 795, and serine 813. The helical transmembrane segment at 859 to 879 threads the bilayer; it reads LIFVLIWCLVIFLAEVAASLV. The 297-residue stretch at 859-1155 folds into the ABC transmembrane type-1 2 domain; the sequence is LIFVLIWCLV…AVNSSIDVDS (297 aa). At 880–918 the chain is on the extracellular side; that stretch reads VLWLLGNTPLQDKGNSTHSRNNSYAVIITSTSSYYVFYI. N-linked (GlcNAc...) asparagine glycosylation is found at asparagine 894 and asparagine 900. Residues 919 to 939 form a discontinuously helical membrane-spanning segment; sequence YVGVADTLLAMGFFRGLPLVH. Residues 940 to 990 lie on the Cytoplasmic side of the membrane; the sequence is TLITVSKILHNKMLHSVLQAPMSTLNTLKAGGILNRFSKDIAILDDLLPLT. A helical membrane pass occupies residues 991–1011; the sequence is IFDFIQLLLIVIGAIAVVAVL. The Extracellular portion of the chain corresponds to 1012 to 1013; sequence QP. A helical transmembrane segment spans residues 1014-1034; the sequence is YIFVATVPVIVAFIMLRAYFL. Topologically, residues 1035-1095 are cytoplasmic; it reads QTSQQLKQLE…TANWFLYLST (61 aa). The helical transmembrane segment at 1096-1116 threads the bilayer; the sequence is LRWFQMRIEMIFVIFFIAVTF. Residues 1117 to 1130 lie on the Extracellular side of the membrane; it reads ISILTTGEGEGRVG. A helical transmembrane segment spans residues 1131 to 1151; the sequence is IILTLAMNIMSTLQWAVNSSI. Over 1152–1480 the chain is Cytoplasmic; the sequence is DVDSLMRSVS…TEEEVQDTRL (329 aa). One can recognise an ABC transporter 2 domain in the interval 1210–1443; sequence MTVKDLTAKY…RSLFQQAISP (234 aa). ATP-binding positions include tyrosine 1219 and 1244–1251; that span reads GRTGSGKS. The tract at residues 1386–1480 is interaction with GORASP2; it reads RTLKQAFADC…TEEEVQDTRL (95 aa). Cysteine 1395 carries the S-palmitoyl cysteine lipid modification. Phosphoserine occurs at positions 1444 and 1456. The tract at residues 1452 to 1480 is disordered; it reads HRNSSKCKSKPQIAALKEETEEEVQDTRL. The span at 1470–1480 shows a compositional bias: acidic residues; sequence ETEEEVQDTRL. The short motif at 1478–1480 is the PDZ-binding element; the sequence is TRL.

The protein belongs to the ABC transporter superfamily. ABCC family. CFTR transporter (TC 3.A.1.202) subfamily. Monomer; does not require oligomerization for channel activity. May form oligomers in the membrane. Interacts with SLC26A3, SLC26A6 and NHERF1. Interacts with SHANK2. Interacts with MYO6. Interacts (via C-terminus) with GOPC (via PDZ domain); this promotes CFTR internalization and thereby decreases channel activity. Interacts with SLC4A7 through NHERF1. Found in a complex with MYO5B and RAB11A. Interacts with ANO1. Interacts with SLC26A8. Interacts with AHCYL1; the interaction increases CFTR activity. Interacts with CSE1L. The core-glycosylated form interacts with GORASP2 (via PDZ GRASP-type 1 domain) in respone to ER stress. Interacts with MARCHF2; the interaction leads to CFTR ubiqtuitination and degradation. Interacts with ADGRG2. In terms of processing, N-glycosylated. Post-translationally, phosphorylated; cAMP treatment promotes phosphorylation and activates the channel. Dephosphorylation decreases the ATPase activity (in vitro). Phosphorylation at PKA sites activates the channel. Phosphorylation at PKC sites enhances the response to phosphorylation by PKA. Phosphorylated by AMPK; this inhibits channel activity. Ubiquitinated, leading to its degradation in the lysosome. Deubiquitination by USP10 in early endosomes enhances its endocytic recycling to the cell membrane. Ubiquitinated by RNF185 during ER stress. Ubiquitinated by MARCHF2.

The protein localises to the apical cell membrane. Its subcellular location is the early endosome membrane. It is found in the cell membrane. The protein resides in the recycling endosome membrane. It localises to the endoplasmic reticulum membrane. The protein localises to the nucleus. The enzyme catalyses ATP + H2O + closed Cl(-) channel = ADP + phosphate + open Cl(-) channel.. The catalysed reaction is chloride(in) = chloride(out). It catalyses the reaction hydrogencarbonate(in) = hydrogencarbonate(out). It carries out the reaction ATP + H2O = ADP + phosphate + H(+). Functionally, epithelial ion channel that plays an important role in the regulation of epithelial ion and water transport and fluid homeostasis. Mediates the transport of chloride ions across the cell membrane. Possesses an intrinsic ATPase activity and utilizes ATP to gate its channel; the passive flow of anions through the channel is gated by cycles of ATP binding and hydrolysis by the ATP-binding domains. The ion channel is also permeable to HCO(3)(-); selectivity depends on the extracellular chloride concentration. Exerts its function also by modulating the activity of other ion channels and transporters. Contributes to the regulation of the pH and the ion content of the epithelial fluid layer. Modulates the activity of the epithelial sodium channel (ENaC) complex, in part by regulating the cell surface expression of the ENaC complex. May regulate bicarbonate secretion and salvage in epithelial cells by regulating the transporter SLC4A7. Can inhibit the chloride channel activity of ANO1. Plays a role in the chloride and bicarbonate homeostasis during sperm epididymal maturation and capacitation. This Pongo abelii (Sumatran orangutan) protein is Cystic fibrosis transmembrane conductance regulator.